Consider the following 205-residue polypeptide: Snake venom metalloproteinase BmooMPalpha-I (205 aa).

The Peptidase M12B domain maps to 8 to 204 (RYIELVVVAD…HNPQCILNEP (197 aa)). Ca(2+) contacts are provided by E11 and D95. Intrachain disulfides connect C119-C199, C159-C183, and C161-C166. Position 144 (H144) interacts with Zn(2+). The active site involves E145. Residues H148 and H154 each contribute to the Zn(2+) site. Residues C199 and N202 each contribute to the Ca(2+) site.

Belongs to the venom metalloproteinase (M12B) family. P-I subfamily. In terms of assembly, monomer. Zn(2+) is required as a cofactor. In terms of tissue distribution, expressed by the venom gland.

It localises to the secreted. Its activity is regulated as follows. Inhibited by EDTA. Not inhibited by the serine proteinase inhibitors aprotinin and benzamidine. Its function is as follows. Snake venom zinc metalloproteinase that cleaves the alpha chain of fibrinogen (FGA) first followed by the beta chain (FGB) and shows no effect on the gamma chain. Cleaves only the beta chain of fibrin, leaving the gamma-dimer untouched. Shows proteolytic activity towards azocasein. Causes defibrinogenation when intraperitoneally administered on mice. This Bothrops moojeni (Lance-headed viper) protein is Snake venom metalloproteinase BmooMPalpha-I.